The primary structure comprises 172 residues: Podoplanin (172 aa).

A signal peptide spans 1-22 (MWTVPVLFWVLGSVWFWDSAQG). At 23–141 (GTIGVNEDDI…KKDGLPVVTL (119 aa)) the chain is on the extracellular side. Thr-37, Thr-51, Thr-52, Thr-53, and Thr-56 each carry an O-linked (GalNAc...) threonine glycan. Residues 49–132 (KITTTGATGG…AGDETQTTDK (84 aa)) form a disordered region. Polar residues predominate over residues 51–63 (TTTGATGGLNEST). The N-linked (GlcNAc...) asparagine glycan is linked to Asn-60. O-linked (GalNAc...) threonine glycosylation is found at Thr-63, Thr-71, and Thr-77. Over residues 72-81 (QRERGTKPPL) the composition is skewed to basic and acidic residues. O-linked (GalNAc...) serine glycosylation is present at Ser-85. Thr-86 is a glycosylation site (O-linked (GalNAc...) threonine). Residue Ser-87 is glycosylated (O-linked (GalNAc...) serine). Thr-89 carries O-linked (GalNAc...) threonine glycosylation. Ser-90 is a glycosylation site (O-linked (GalNAc...) serine). The segment covering 90–99 (SDHDHREHES) has biased composition (basic and acidic residues). O-linked (GalNAc...) threonine glycosylation is found at Thr-100, Thr-101, Thr-102, Thr-107, and Thr-115. The segment covering 100 to 109 (TTTVKVVTSH) has biased composition (low complexity). The span at 110 to 132 (SVDKKTSHPNRDNAGDETQTTDK) shows a compositional bias: basic and acidic residues. Residues 142-162 (VGIIVGVLLAIGFVGGIFIVV) form a helical membrane-spanning segment. Positions 143–147 (GIIVG) are requires for dimerization and lipidd rafts association. At 163-172 (MKKISGRFSP) the chain is on the cytoplasmic side. A requires for interaction with MSN and EZR region spans residues 164 to 165 (KK).

This sequence belongs to the podoplanin family. Homodimer. Interacts with CLEC1B; the interaction is independent of CLEC1B glycosylation and activates CLEC1B; the interaction is dependent of sialic acid on O-glycans. Interacts with CD9; this interaction is homophilic and attenuates platelet aggregation and pulmonary metastasis induced by PDPN. Interacts with LGALS8; the interaction is glycosylation-dependent; may participate in connection of the lymphatic endothelium to the surrounding extracellular matrix. Interacts with HSPA9. Interacts (via extracellular domain) with CD44; this interaction is required for PDPN-mediated directional migration and regulation of lamellipodia extension/stabilization during cell spreading and migration. Interacts (via cytoplasmic domain) with MSN and EZR; activates RHOA and promotes epithelial-mesenchymal transition. Interacts with CCL21; relocalized PDPN to the basolateral membrane. Post-translationally, extensively O-glycosylated. Contains sialic acid residues. O-glycosylation is necessary for platelet aggregation activity. Disialylated at Thr-52; sialic acid is critical for platelet-aggregating activity and for CLEC1B interaction. In terms of processing, phosphorylated by PKA; decreases cell migration. The N-terminus is blocked. Detected at high levels in lung and brain, at lower levels in kidney, stomach, liver, spleen and esophagus, and not detected in skin and small intestine. Expressed in epithelial cells of choroid plexus, ependyma, glomerulus and alveolus, in mesothelial cells and in endothelia of lymphatic vessels. Also expressed in stromal cells of peripheral lymphoid tissue and thymic epithelial cells. Detected in carcinoma cell lines and cultured fibroblasts. Expressed at higher levels in colon carcinomas than in normal colon tissue.

The protein localises to the membrane. It localises to the cell projection. It is found in the lamellipodium membrane. The protein resides in the filopodium membrane. Its subcellular location is the microvillus membrane. The protein localises to the ruffle membrane. It localises to the membrane raft. It is found in the apical cell membrane. The protein resides in the basolateral cell membrane. Its subcellular location is the invadopodium. In terms of biological role, mediates effects on cell migration and adhesion through its different partners. During development plays a role in blood and lymphatic vessels separation by binding CLEC1B, triggering CLEC1B activation in platelets and leading to platelet activation and/or aggregation. Interaction with CD9, on the contrary, attenuates platelet aggregation and pulmonary metastasis induced by PDPN. Mediates effects on cell migration and adhesion through its different partners. Through MSN or EZR interaction promotes epithelial-mesenchymal transition (EMT) leading to ERZ phosphorylation and triggering RHOA activation leading to cell migration increase and invasiveness. Interaction with CD44 promotes directional cell migration in epithelial and tumor cells. In lymph nodes (LNs), controls fibroblastic reticular cells (FRCs) adhesion to the extracellular matrix (ECM) and contraction of the actomyosin by maintaining ERM proteins (EZR; MSN and RDX) and MYL9 activation through association with unknown transmembrane proteins. Engagement of CLEC1B by PDPN promotes FRCs relaxation by blocking lateral membrane interactions leading to reduction of ERM proteins (EZR; MSN and RDX) and MYL9 activation. Through binding with LGALS8 may participate in connection of the lymphatic endothelium to the surrounding extracellular matrix. In keratinocytes, induces changes in cell morphology showing an elongated shape, numerous membrane protrusions, major reorganization of the actin cytoskeleton, increased motility and decreased cell adhesion. Controls invadopodia stability and maturation leading to efficient degradation of the extracellular matrix (ECM) in tumor cells through modulation of RHOC activity in order to activate ROCK1/ROCK2 and LIMK1/LIMK2 and inactivation of CFL1. Required for normal lung cell proliferation and alveolus formation at birth. Does not function as a water channel or as a regulator of aquaporin-type water channels. Does not have any effect on folic acid or amino acid transport. This Mus musculus (Mouse) protein is Podoplanin.